The primary structure comprises 147 residues: uncharacterized protein (147 aa).

This is an uncharacterized protein from Aedes vexans (Inland floodwater mosquito).